A 370-amino-acid chain; its full sequence is Glutamate 5-kinase (370 aa).

K17 is an ATP binding site. The substrate site is built by S56, D143, and N155. 175–176 (SD) is a binding site for ATP. The PUA domain maps to 280-357 (KGEITVDAGA…DEIEGILGYP (78 aa)).

It belongs to the glutamate 5-kinase family.

It localises to the cytoplasm. The enzyme catalyses L-glutamate + ATP = L-glutamyl 5-phosphate + ADP. Its pathway is amino-acid biosynthesis; L-proline biosynthesis; L-glutamate 5-semialdehyde from L-glutamate: step 1/2. Catalyzes the transfer of a phosphate group to glutamate to form L-glutamate 5-phosphate. This is Glutamate 5-kinase from Paracoccus denitrificans (strain Pd 1222).